Here is an 861-residue protein sequence, read N- to C-terminus: Translation initiation factor IF-2 (861 aa).

Disordered regions lie at residues Met1–Ala69 and Ala92–Lys273. The segment covering Gly53 to Gly65 has biased composition (gly residues). Residues Ala94–Asp108 show a composition bias toward basic and acidic residues. The span at Ala109 to Gln120 shows a compositional bias: low complexity. Basic and acidic residues-rich tracts occupy residues Arg121–Ala155 and Asp163–Pro186. Positions Pro213 to Arg223 are enriched in low complexity. Residues Arg255–Lys273 show a composition bias toward basic and acidic residues. The tr-type G domain occupies Pro357–Lys527. The G1 stretch occupies residues Gly366 to Thr373. Gly366–Thr373 contacts GTP. A G2 region spans residues Gly391–His395. Residues Asp413 to Gly416 are G3. Residues Asp413–His417 and Asn467–Asp470 contribute to the GTP site. Residues Asn467–Asp470 are G4. The G5 stretch occupies residues Ser503 to Lys505.

It belongs to the TRAFAC class translation factor GTPase superfamily. Classic translation factor GTPase family. IF-2 subfamily.

It is found in the cytoplasm. Functionally, one of the essential components for the initiation of protein synthesis. Protects formylmethionyl-tRNA from spontaneous hydrolysis and promotes its binding to the 30S ribosomal subunits. Also involved in the hydrolysis of GTP during the formation of the 70S ribosomal complex. This is Translation initiation factor IF-2 from Maricaulis maris (strain MCS10) (Caulobacter maris).